Here is a 499-residue protein sequence, read N- to C-terminus: Probable cytosol aminopeptidase (499 aa).

Mn(2+) contacts are provided by Lys268 and Asp273. Residue Lys280 is part of the active site. Residues Asp291, Asp350, and Glu352 each contribute to the Mn(2+) site. Arg354 is a catalytic residue.

This sequence belongs to the peptidase M17 family. The cofactor is Mn(2+).

The protein resides in the cytoplasm. The catalysed reaction is Release of an N-terminal amino acid, Xaa-|-Yaa-, in which Xaa is preferably Leu, but may be other amino acids including Pro although not Arg or Lys, and Yaa may be Pro. Amino acid amides and methyl esters are also readily hydrolyzed, but rates on arylamides are exceedingly low.. It carries out the reaction Release of an N-terminal amino acid, preferentially leucine, but not glutamic or aspartic acids.. In terms of biological role, presumably involved in the processing and regular turnover of intracellular proteins. Catalyzes the removal of unsubstituted N-terminal amino acids from various peptides. This is Probable cytosol aminopeptidase from Halorhodospira halophila (strain DSM 244 / SL1) (Ectothiorhodospira halophila (strain DSM 244 / SL1)).